The sequence spans 163 residues: Nucleotide-binding protein PMI0103 (163 aa).

The protein belongs to the YajQ family.

Nucleotide-binding protein. In Proteus mirabilis (strain HI4320), this protein is Nucleotide-binding protein PMI0103.